Reading from the N-terminus, the 274-residue chain is Pyrroline-5-carboxylate reductase 3 (274 aa).

Belongs to the pyrroline-5-carboxylate reductase family. In terms of assembly, homodecamer; composed of 5 homodimers.

Its subcellular location is the cytoplasm. It carries out the reaction L-proline + NADP(+) = (S)-1-pyrroline-5-carboxylate + NADPH + 2 H(+). The catalysed reaction is L-proline + NAD(+) = (S)-1-pyrroline-5-carboxylate + NADH + 2 H(+). It participates in amino-acid biosynthesis; L-proline biosynthesis; L-proline from L-glutamate 5-semialdehyde: step 1/1. Oxidoreductase that catalyzes the last step in proline biosynthesis, which corresponds to the reduction of pyrroline-5-carboxylate (P5C) to L-proline using NAD(P)H. Proline is synthesized from either glutamate or ornithine; both are converted to P5C, and then to proline via pyrroline-5-carboxylate reductases (PYCRs). PYCR3 is exclusively linked to the biosynthesis of proline from ornithine. In Xenopus laevis (African clawed frog), this protein is Pyrroline-5-carboxylate reductase 3.